Reading from the N-terminus, the 444-residue chain is MKQYKLVNTTQKEKTLCLEIAIDTKLWKETQQKQTQDLTKNMKIKGFRKGKVPPTLAKDYLDRAELLQRSAQAVIDAIFQPLQQEAVIADNENVIEDFPTIDFKTINENDCVILFDFDLVPQFEPPDYKHIKDLSPIVPLKDEEFNKELHNIEKNKGKLVDVSDKALANNDIAVIDFVGKVDGKVLESATAKQYELTIGSNSFIDGFESGLIGMKVGDKRQLKLKFPKDYHAEELKGKPVEFDIELKAIKQLEITPMDETNFKEYLPAQYQGFNSLKEFKTYFHKLVSAKKLEITLQENSVKIRQFFLANTTLPYIPDSLIKLESDRLLRAQKDQAEQYKIPFERLLAASKLSLEQLQQRNIKEARDNVTFALVMKRIADVEKIKVDNKKIHSEIESIIDVEYPFVNAELKKQMFHNMEQQKDFVESIILNRLTTTKIIEYSTH.

The 86-residue stretch at 170 to 255 (NDIAVIDFVG…LKAIKQLEIT (86 aa)) folds into the PPIase FKBP-type domain.

It belongs to the FKBP-type PPIase family. Tig subfamily.

Its subcellular location is the cytoplasm. The enzyme catalyses [protein]-peptidylproline (omega=180) = [protein]-peptidylproline (omega=0). In terms of biological role, involved in protein export. Acts as a chaperone by maintaining the newly synthesized protein in an open conformation. Functions as a peptidyl-prolyl cis-trans isomerase. The polypeptide is Trigger factor (tig) (Mycoplasma pneumoniae (strain ATCC 29342 / M129 / Subtype 1) (Mycoplasmoides pneumoniae)).